The sequence spans 359 residues: Cytosolic sulfotransferase 15 (359 aa).

A 3'-phosphoadenylyl sulfate-binding site is contributed by 101 to 106 (KSGTTW). The active-site Proton acceptor is the His168. 3'-phosphoadenylyl sulfate contacts are provided by residues Arg190, Ser198, Tyr256, and 322–324 (RKG).

The protein belongs to the sulfotransferase 1 family. Expressed in leaves.

It localises to the cytoplasm. It carries out the reaction a 12-hydroxyjasmonate + 3'-phosphoadenylyl sulfate = a 12-sulfojasmonate + adenosine 3',5'-bisphosphate + H(+). Its function is as follows. Sulfotransferase that utilizes 3'-phospho-5'-adenylyl sulfate (PAPS) as sulfonate donor to specifically catalyze the sulfate conjugation of hydroxyjasmonates, with a preference for 12-hydroxyjasmonate over 11-hydroxyjasmonate. No activity with 12-hydroxyjasmonic acid methyl ester, cucurbic acid, 7-iso-cucurbic acid, 6-epi-cucurbic acid, 6-epi-7-iso-cucurbic acid and their methyl esters, prostaglandin E2, arachidonyl alcohol and 11-eicosenol. In Arabidopsis thaliana (Mouse-ear cress), this protein is Cytosolic sulfotransferase 15 (SOT15).